Consider the following 129-residue polypeptide: Large ribosomal subunit protein bL17 (129 aa).

This sequence belongs to the bacterial ribosomal protein bL17 family. In terms of assembly, part of the 50S ribosomal subunit. Contacts protein L32.

The protein is Large ribosomal subunit protein bL17 of Yersinia pseudotuberculosis serotype O:1b (strain IP 31758).